A 473-amino-acid chain; its full sequence is MRKSLITLGLASVIGTSSFLIPFTSKTASAETLDEKKQKIESKQSEVASSIEAKEKELTELQENQSKIEKELKDINDKALDTSNKIEDKKEENDKTKEEIKKLKKEIKETEARIEKRNEILKKRVRSLQESGGSQGYIDVLLGSTSFGDFISRATAVSSIVDADKDLIKQQEQDKAKLEDSEADLNDKLKEVQAALAKLETMQKDLDKQLNEKDKLFDEAKASQKKTAKAISELKSEASELANQKANTEAEQARIKKEQEAAAALIKKQEEAQKASDETQTDDSQTATTESSKASSSDDSSDNSSDNSSNGSSNSSSNGSSSKKSSGSNSNSGGTVISNSGGIEGAISVGSSIVGQSPYKFGGGRTQSDINNRIFDCSSFVRWAYASAGVNLGPVGGTTTDTLVGRGQAVSASEMKRGDLVFFDTYKTNGHVGIYLGNGTFLNDNTSHGVSVDSMSNPYWKAAFKGVVRRVVQ.

The first 30 residues, 1 to 30, serve as a signal peptide directing secretion; sequence MRKSLITLGLASVIGTSSFLIPFTSKTASA. 3 disordered regions span residues 31–52, 79–98, and 237–337; these read ETLDEKKQKIESKQSEVASSIE, ALDTSNKIEDKKEENDKTKE, and EASE…GTVI. Residues 33-44 are compositionally biased toward basic and acidic residues; it reads LDEKKQKIESKQ. The segment covering 241 to 250 has biased composition (polar residues); the sequence is LANQKANTEA. 2 stretches are compositionally biased toward basic and acidic residues: residues 251 to 260 and 267 to 277; these read EQARIKKEQE and KKQEEAQKASD. Residues 291 to 337 show a composition bias toward low complexity; that stretch reads SSKASSSDDSSDNSSDNSSNGSSNSSSNGSSSKKSSGSNSNSGGTVI. Residues 340–471 enclose the NlpC/P60 domain; it reads SGGIEGAISV…AAFKGVVRRV (132 aa). Residue Cys-377 is the Nucleophile of the active site. The Proton acceptor role is filled by His-431. The active site involves Asn-443.

This sequence belongs to the peptidase C40 family. In terms of processing, identified in the extracellular proteome as a number of processing products of about 50 and 30 kDa.

It is found in the secreted. It localises to the cell wall. With respect to regulation, detected in exponentially growing cells, the 50 and 30 kDa processing products disappear upon entry into stationary phase with the concomitant appearance of a 20 kDa products. The 50 kDa form persists in the absence of extracellular proteases. The C-terminal part of CwlO shows a cell wall hydrolytic DL-endopeptidase activity. In Bacillus subtilis (strain 168), this protein is Peptidoglycan DL-endopeptidase CwlO (cwlO).